A 260-amino-acid polypeptide reads, in one-letter code: tRNA pseudouridine synthase A (260 aa).

Aspartate 51 acts as the Nucleophile in catalysis. Residue tyrosine 109 participates in substrate binding.

It belongs to the tRNA pseudouridine synthase TruA family. Homodimer.

The enzyme catalyses uridine(38/39/40) in tRNA = pseudouridine(38/39/40) in tRNA. Its function is as follows. Formation of pseudouridine at positions 38, 39 and 40 in the anticodon stem and loop of transfer RNAs. This chain is tRNA pseudouridine synthase A, found in Methylibium petroleiphilum (strain ATCC BAA-1232 / LMG 22953 / PM1).